A 378-amino-acid chain; its full sequence is Acetylornithine deacetylase (378 aa).

H76 provides a ligand contact to Zn(2+). Residue D78 is part of the active site. D108 serves as a coordination point for Zn(2+). E140 is a catalytic residue. Positions 141, 165, and 351 each coordinate Zn(2+).

This sequence belongs to the peptidase M20A family. ArgE subfamily. Homodimer. Zn(2+) is required as a cofactor. Requires Co(2+) as cofactor. It depends on glutathione as a cofactor.

It is found in the cytoplasm. It catalyses the reaction N(2)-acetyl-L-ornithine + H2O = L-ornithine + acetate. Its pathway is amino-acid biosynthesis; L-arginine biosynthesis; L-ornithine from N(2)-acetyl-L-ornithine (linear): step 1/1. Its function is as follows. Catalyzes the hydrolysis of the amide bond of N(2)-acetylated L-amino acids. Cleaves the acetyl group from N-acetyl-L-ornithine to form L-ornithine, an intermediate in L-arginine biosynthesis pathway, and a branchpoint in the synthesis of polyamines. This is Acetylornithine deacetylase from Vibrio cholerae serotype O1 (strain ATCC 39541 / Classical Ogawa 395 / O395).